The chain runs to 315 residues: tRNA dimethylallyltransferase (315 aa).

14 to 21 (GPTASGKT) serves as a coordination point for ATP. Residue 16 to 21 (TASGKT) coordinates substrate. Interaction with substrate tRNA stretches follow at residues 39 to 42 (DSAL), 163 to 167 (QRIQR), and 248 to 253 (RCVGYR).

Belongs to the IPP transferase family. Monomer. Mg(2+) is required as a cofactor.

The enzyme catalyses adenosine(37) in tRNA + dimethylallyl diphosphate = N(6)-dimethylallyladenosine(37) in tRNA + diphosphate. In terms of biological role, catalyzes the transfer of a dimethylallyl group onto the adenine at position 37 in tRNAs that read codons beginning with uridine, leading to the formation of N6-(dimethylallyl)adenosine (i(6)A). In Paraburkholderia xenovorans (strain LB400), this protein is tRNA dimethylallyltransferase.